We begin with the raw amino-acid sequence, 330 residues long: Aspartate--ammonia ligase (330 aa).

The protein belongs to the class-II aminoacyl-tRNA synthetase family. AsnA subfamily.

It localises to the cytoplasm. The catalysed reaction is L-aspartate + NH4(+) + ATP = L-asparagine + AMP + diphosphate + H(+). It participates in amino-acid biosynthesis; L-asparagine biosynthesis; L-asparagine from L-aspartate (ammonia route): step 1/1. This chain is Aspartate--ammonia ligase, found in Klebsiella pneumoniae subsp. pneumoniae (strain ATCC 700721 / MGH 78578).